The sequence spans 212 residues: Ribosomal RNA small subunit methyltransferase G (212 aa).

Residues G73, F78, 96-98, 124-125, and R141 contribute to the S-adenosyl-L-methionine site; these read ESS and VE.

Belongs to the methyltransferase superfamily. RNA methyltransferase RsmG family.

The protein resides in the cytoplasm. Its function is as follows. Specifically methylates the N7 position of a guanine in 16S rRNA. The chain is Ribosomal RNA small subunit methyltransferase G from Aster yellows witches'-broom phytoplasma (strain AYWB).